The primary structure comprises 259 residues: Cysteine protease IpaJ (259 aa).

Active-site residues include cysteine 64, histidine 206, and aspartate 218.

Its subcellular location is the secreted. The protein localises to the host cytoplasm. Virulence factor that eliminates N-myristoyl protein modifications in infected host cells. Acts as a cysteine protease that cleaves the peptide bond between N-myristoylated Gly-2 and Asn-3 of human ARF1, leading to the elimination of the myristoyl group and alteration of protein trafficking in host cell. Could also cleave an array of N-myristoylated host proteins involved in cellular growth, signal transduction, autophagasome maturation and organelle function. This is Cysteine protease IpaJ (ipaJ) from Shigella flexneri.